Here is a 338-residue protein sequence, read N- to C-terminus: Probable arabinan endo-1,5-alpha-L-arabinosidase A (338 aa).

Residues 1–20 (MRASFVVTAPLLAAAVHGYA) form the signal peptide. D33 serves as the catalytic Proton acceptor. E217 serves as the catalytic Proton donor.

It belongs to the glycosyl hydrolase 43 family.

It is found in the secreted. It carries out the reaction Endohydrolysis of (1-&gt;5)-alpha-arabinofuranosidic linkages in (1-&gt;5)-arabinans.. The protein operates within glycan metabolism; L-arabinan degradation. Functionally, endo-1,5-alpha-L-arabinanase involved in degradation of pectin. Its preferred substrate is linear 1,5-alpha-L-arabinan. The protein is Probable arabinan endo-1,5-alpha-L-arabinosidase A (abnA) of Aspergillus terreus (strain NIH 2624 / FGSC A1156).